Reading from the N-terminus, the 305-residue chain is uncharacterized protein (305 aa).

Transmembrane regions (helical) follow at residues 4–24, 38–58, 67–87, 95–115, 125–145, 152–172, 183–203, 215–235, 250–270, and 272–292; these read LNIYIMLLGFSIFTGATFNLA, AWRFGLAAAVMLIILIFTEGI, AVSYIVLGIIGIFGFNALFFV, VNGALIMGLNPLLTAILARII, VLGIFFAFIGVLLVITQGSIE, ISGGDLIIFTGNVCWALYGVL, LSTTTYTMVIGAVSLIVVSLF, IGVWGAIAFMAFFTSVLGYLW, LFFNLVPVVTMIISFAVGTPI, and VFQVIGAVLVILGVLTASGVI. 2 EamA domains span residues 15–140 and 164–290; these read IFTG…LVIT and VCWA…TASG.

It belongs to the EamA transporter family.

It localises to the cell membrane. This is an uncharacterized protein from Bacillus subtilis (strain 168).